Consider the following 545-residue polypeptide: MAELTINADDVRNALNEFAASYEPGNAERVEVGRVTTASDGIARVEGLPSVMANELLRFEDGTLGLAQNLDVREIGVIILGDFTGIEEGQEVHRTGEILSVPVGDAFLGRVVDPLGQPIDDLGEIKAEATRALELQAPGVTERKSVHEPMQTGLKAIDAMIPIGRGQRQLIIGDRQTGKTAIAVDTIINQKANWASGDVTKQVRCVYVGVGQKASTIAAVRQTLEDHGALEYTTIVASPASDPAGFKYLAPYAGSAIGQHWMYGGKHVLVIFDDLSKQAEAYRAVSLLLRRPPGREAYPGDVFYLHSRLLERCAKLSDELGAGSMTGLPIVETKANDVSAYIPTNVISITDGQIFLQSDLFNANQRPAVDVGVSVSRVGGAAQVKSMKKVSGTLKLDLAQYRDMQAFAMFASDLDAASRQQLTRGARLMELLKQGQYSPFPVENQVVSIWAGTNGYLDDVPVEDISRFESEFLEHLTHKSSILTTLAQTNVLDDDTAAALKEAIVSFKKGFFGEGDNHLVGAGHEEHAAISGGDVDQEKIVKQKR.

173 to 180 lines the ATP pocket; that stretch reads GDRQTGKT.

It belongs to the ATPase alpha/beta chains family. In terms of assembly, F-type ATPases have 2 components, CF(1) - the catalytic core - and CF(0) - the membrane proton channel. CF(1) has five subunits: alpha(3), beta(3), gamma(1), delta(1), epsilon(1). CF(0) has three main subunits: a(1), b(2) and c(9-12). The alpha and beta chains form an alternating ring which encloses part of the gamma chain. CF(1) is attached to CF(0) by a central stalk formed by the gamma and epsilon chains, while a peripheral stalk is formed by the delta and b chains.

The protein localises to the cell membrane. It catalyses the reaction ATP + H2O + 4 H(+)(in) = ADP + phosphate + 5 H(+)(out). Functionally, produces ATP from ADP in the presence of a proton gradient across the membrane. The alpha chain is a regulatory subunit. The chain is ATP synthase subunit alpha from Paenarthrobacter aurescens (strain TC1).